A 141-amino-acid polypeptide reads, in one-letter code: Endoribonuclease YbeY (141 aa).

Zn(2+)-binding residues include His-105, His-109, and Asp-115.

The protein belongs to the endoribonuclease YbeY family. Zn(2+) serves as cofactor.

Its subcellular location is the cytoplasm. In terms of biological role, single strand-specific metallo-endoribonuclease involved in late-stage 70S ribosome quality control and in maturation of the 3' terminus of the 16S rRNA. This Karelsulcia muelleri (strain GWSS) (Sulcia muelleri) protein is Endoribonuclease YbeY.